The primary structure comprises 365 residues: Parathion hydrolase (365 aa).

The segment at residues 1 to 29 is a signal peptide (tat-type signal); it reads MQTRRVVLKSAAAAGTLLGGLAGCASVAG. Positions 55, 57, 169, 201, 230, and 301 each coordinate Zn(2+). Lys-169 bears the N6-carboxylysine mark.

Belongs to the metallo-dependent hydrolases superfamily. Phosphotriesterase family. Homodimer. Requires Zn(2+) as cofactor. Post-translationally, predicted to be exported by the Tat system. The position of the signal peptide cleavage has been experimentally proven.

It localises to the cell membrane. The enzyme catalyses An aryl dialkyl phosphate + H2O = dialkyl phosphate + an aryl alcohol.. In terms of biological role, has an unusual substrate specificity for synthetic organophosphate triesters and phosphorofluoridates. All of the phosphate triesters found to be substrates are synthetic compounds. The identity of any naturally occurring substrate for the enzyme is unknown. Has no detectable activity with phosphate monoesters or diesters and no activity as an esterase or protease. It catalyzes the hydrolysis of the insecticide paraoxon at a rate approaching the diffusion limit and thus appears to be optimally evolved for utilizing this synthetic substrate. The polypeptide is Parathion hydrolase (opd) (Brevundimonas diminuta (Pseudomonas diminuta)).